Here is a 116-residue protein sequence, read N- to C-terminus: Large ribosomal subunit protein uL22c (116 aa).

The protein belongs to the universal ribosomal protein uL22 family. In terms of assembly, part of the 50S ribosomal subunit.

Its subcellular location is the plastid. It is found in the chloroplast. Its function is as follows. This protein binds specifically to 23S rRNA. Functionally, the globular domain of the protein is located near the polypeptide exit tunnel on the outside of the subunit, while an extended beta-hairpin is found that lines the wall of the exit tunnel in the center of the 70S ribosome. In Euglena gracilis, this protein is Large ribosomal subunit protein uL22c (rpl22).